We begin with the raw amino-acid sequence, 335 residues long: Nucleoid-associated protein SeAg_B2375 (335 aa).

This sequence belongs to the YejK family.

It is found in the cytoplasm. The protein localises to the nucleoid. In Salmonella agona (strain SL483), this protein is Nucleoid-associated protein SeAg_B2375.